We begin with the raw amino-acid sequence, 952 residues long: RNA polymerase-associated protein RapA (952 aa).

One can recognise a Helicase ATP-binding domain in the interval 164 to 334 (EVGRRYAPRV…FARLRLLDPD (171 aa)). Position 177-184 (177-184 (DEVGLGKT)) interacts with ATP. Positions 280–283 (DEAH) match the DEAH box motif. A Helicase C-terminal domain is found at 492-668 (RVNWLLELLK…GKSDGLESLI (177 aa)).

It belongs to the SNF2/RAD54 helicase family. RapA subfamily. Interacts with the RNAP. Has a higher affinity for the core RNAP than for the holoenzyme. Its ATPase activity is stimulated by binding to RNAP.

Functionally, transcription regulator that activates transcription by stimulating RNA polymerase (RNAP) recycling in case of stress conditions such as supercoiled DNA or high salt concentrations. Probably acts by releasing the RNAP, when it is trapped or immobilized on tightly supercoiled DNA. Does not activate transcription on linear DNA. Probably not involved in DNA repair. The chain is RNA polymerase-associated protein RapA from Aliivibrio fischeri (strain ATCC 700601 / ES114) (Vibrio fischeri).